A 199-amino-acid polypeptide reads, in one-letter code: Chaperone protein TorD (199 aa).

The protein belongs to the TorD/DmsD family. TorD subfamily.

The protein localises to the cytoplasm. Functionally, involved in the biogenesis of TorA. Acts on TorA before the insertion of the molybdenum cofactor and, as a result, probably favors a conformation of the apoenzyme that is competent for acquiring the cofactor. This Escherichia coli O45:K1 (strain S88 / ExPEC) protein is Chaperone protein TorD.